The sequence spans 408 residues: Imidazolonepropionase (408 aa).

Positions 73 and 75 each coordinate Fe(3+). The Zn(2+) site is built by H73 and H75. 4-imidazolone-5-propanoate contacts are provided by R82, Y145, and H178. N-formimidoyl-L-glutamate is bound at residue Y145. Fe(3+) is bound at residue H243. H243 lines the Zn(2+) pocket. Position 246 (Q246) interacts with 4-imidazolone-5-propanoate. Residue D318 coordinates Fe(3+). D318 contacts Zn(2+). Positions 320 and 322 each coordinate N-formimidoyl-L-glutamate. S323 contributes to the 4-imidazolone-5-propanoate binding site.

The protein belongs to the metallo-dependent hydrolases superfamily. HutI family. Zn(2+) is required as a cofactor. The cofactor is Fe(3+).

It localises to the cytoplasm. It catalyses the reaction 4-imidazolone-5-propanoate + H2O = N-formimidoyl-L-glutamate. It functions in the pathway amino-acid degradation; L-histidine degradation into L-glutamate; N-formimidoyl-L-glutamate from L-histidine: step 3/3. Its function is as follows. Catalyzes the hydrolytic cleavage of the carbon-nitrogen bond in imidazolone-5-propanoate to yield N-formimidoyl-L-glutamate. It is the third step in the universal histidine degradation pathway. This Shewanella baltica (strain OS155 / ATCC BAA-1091) protein is Imidazolonepropionase.